Reading from the N-terminus, the 418-residue chain is Sonic hedgehog protein (418 aa).

The signal sequence occupies residues Met1 to Ala23. A lipid anchor (N-palmitoyl cysteine) is attached at Cys24. A Cardin-Weintraub motif is present at residues Arg32 to Lys38. 7 residues coordinate Ca(2+): Glu89, Glu90, Asp95, Thr125, Glu126, Asp129, and Asp131. 3 residues coordinate Zn(2+): His140, Asp147, and His182. Gly197 carries the Cholesterol glycine ester lipid modification.

This sequence belongs to the hedgehog family. As to quaternary structure, interacts with HHATL/GUP1 which negatively regulates HHAT-mediated palmitoylation of the SHH N-terminus. Interacts with BOC and CDON. Interacts with HHIP. Interacts with DISP1 via its cholesterol anchor. Interacts with SCUBE2. In terms of assembly, multimer. Post-translationally, the C-terminal domain displays an autoproteolysis activity and a cholesterol transferase activity. Both activities result in the cleavage of the full-length protein and covalent attachment of a cholesterol moiety to the C-terminal of the newly generated N-terminal fragment (ShhN). Cholesterylation is required for the sonic hedgehog protein N-product targeting to lipid rafts and multimerization. ShhN is the active species in both local and long-range signaling, whereas the C-product (ShhC) is degraded in the reticulum endoplasmic. In terms of processing, N-palmitoylation by HHAT of ShhN is required for sonic hedgehog protein N-product multimerization and full activity. It is a prerequisite for the membrane-proximal positioning and the subsequent shedding of this N-terminal peptide. The lipidated N- and C-terminal peptides of ShhNp can be cleaved (shedding). The N-terminal palmitoylated peptide is cleaved at the Cardin-Weintraub (CW) motif site. The cleavage reduced the interactions with heparan sulfate. The cleavage is enhanced by SCUBE2. In terms of tissue distribution, expressed in the ventral midline of the neural tube and brain. Also found in the notochord and in developing fin bud. In the developing brain, expression occurs in domains that include a discrete region in the floor of the diencephalon.

The protein resides in the endoplasmic reticulum membrane. The protein localises to the golgi apparatus membrane. Its subcellular location is the cell membrane. The catalysed reaction is glycyl-L-cysteinyl-[protein] + cholesterol + H(+) = [protein]-C-terminal glycyl cholesterol ester + N-terminal L-cysteinyl-[protein]. The C-terminal part of the sonic hedgehog protein precursor displays an autoproteolysis and a cholesterol transferase activity. Both activities result in the cleavage of the full-length protein into two parts (ShhN and ShhC) followed by the covalent attachment of a cholesterol moiety to the C-terminal of the newly generated ShhN. Both activities occur in the endoplasmic reticulum. Once cleaved, ShhC is degraded in the endoplasmic reticulum. In terms of biological role, the dually lipidated sonic hedgehog protein N-product (ShhNp) is a morphogen which is essential for a variety of patterning events during development. Involved in dorso-ventral patterning of the brain and in early patterning of the developing eyes. Binds to the patched (PTCH1) receptor, which functions in association with smoothened (SMO), to activate the transcription of target genes. In the absence of SHH, PTCH1 represses the constitutive signaling activity of SMO. This is Sonic hedgehog protein (shha) from Danio rerio (Zebrafish).